Here is a 1058-residue protein sequence, read N- to C-terminus: MYIVKPSWLCHSDDQKKFEVYSVTVSPDNQRVATGGQDGKVRIWSAQSIRDSAKGDNESSDTPSNLSGAPAPGAKQLCSMATHNGAVTVVRFSPDGRYLATGSDDRVVLVWERDSTKVPRKEFGSSGEADTESWIVRKRLAAHDNDIQDLAWAPDSSILVTVGLDSGVIVWSGTTFEKIQRLDAHNSHVKGITFDPANKFFATASDDRTVQIFRYNRASATDVTFSTEATITSPFKQSPLSTYFRRCSWSPDGNHIAAANATNGPVSVVAIINRGTWDSDISLIGHEAPCEVAAFCPRIFARTKEAAEKKDKKSSSEKDKESDVIDVDAEPKVPESVPITVIASAGQDKTLTIWNTSNPRPVVVCHDMALKTITDLAWSQDGMSLFATSLDGSISYVQFEEGELGYVVSMEENESRLTRYGGGKEAAQIPESVEQLVLEEKVEAKEVKDSEKRMEELMGAAGAGSKAIASGATVIPSPASTVAAAAAAPVTTTARATTPLTAATSNPSTPAKPAKQKVTITKDGRKRVAPQLLTTTSSSVQGTLPAATTSSAAVPVASATAETIPVNDFSKPSYALPKGGVSTLVIGSKRRSDDLEDGSNGIQTALKKTRPDDDVPEYIAPVVVSPATTTSQVRLGAPKVRNLLMRSMTVRDAEKPRMANESVSLANGENTSSSSAPHSFNFEVRNGSGNDQTPTKVSVTRNSQVVFVDFVPYYVHLIAGNGCYFWATSAEDGSIVVYSPNGRRMLPPLVTGAPLSFLESQNEYLLAISSVGMLYLWNVVDKKAVFPPVSLAPILDSGSRYEDGGVLRGPHVTQCGVTGSGRVIITLSTGCGYTYDEGLRSWCRLSEPWWATGSQYWSATQLLGDESAKSRWVLAVEERTAEEAQRRAGGRGRYLKQLTRATLNREGYEGMEGVVSIAHLENRIAAAEMLESKHELRTFIIMYARRIAEEGLRSRVDELCRELLGPGKSQDSTWSPTVCGLDKHELLKEVVLKIGKYRESQRVAVVYGQAIGLLEDEVLGVASSSKSAASKGSKDKEDNEEEDGDHDMTDFKDAMSEQ.

WD repeat units lie at residues 15-54 (QKKF…DSAK), 82-121 (THNG…VPRK), 142-181 (AHDN…KIQR), 184-223 (AHNS…ATDV), 239-282 (PLST…SDIS), 319-364 (DKES…PVVV), and 368-409 (MALK…YVVS). The interval 49–73 (IRDSAKGDNESSDTPSNLSGAPAPG) is disordered. The interval 307 to 327 (AEKKDKKSSSEKDKESDVIDV) is disordered. Disordered regions lie at residues 500–536 (LTAA…LTTT), 591–610 (RSDD…KKTR), 651–696 (RDAE…TPTK), and 1023–1058 (SSSK…MSEQ). Polar residues-rich tracts occupy residues 661–678 (ESVS…SAPH) and 687–696 (GSGNDQTPTK). Basic and acidic residues predominate over residues 1046 to 1058 (HDMTDFKDAMSEQ).

Belongs to the WD repeat HIR1 family.

The protein resides in the nucleus. In terms of biological role, required for replication-independent chromatin assembly and for the periodic repression of histone gene transcription during the cell cycle. The polypeptide is Protein HIR1 (HIR1) (Yarrowia lipolytica (strain CLIB 122 / E 150) (Yeast)).